The chain runs to 394 residues: Chaperone protein DnaJ (394 aa).

The J domain occupies Asp5–Gly75. A CR-type zinc finger spans residues Gly150–Thr231. Cys163, Cys166, Cys179, Cys182, Cys205, Cys208, Cys219, and Cys222 together coordinate Zn(2+). 4 CXXCXGXG motif repeats span residues Cys163–Gly170, Cys179–Gly186, Cys205–Gly212, and Cys219–Gly226.

This sequence belongs to the DnaJ family. As to quaternary structure, homodimer. Requires Zn(2+) as cofactor.

The protein localises to the cytoplasm. Participates actively in the response to hyperosmotic and heat shock by preventing the aggregation of stress-denatured proteins and by disaggregating proteins, also in an autonomous, DnaK-independent fashion. Unfolded proteins bind initially to DnaJ; upon interaction with the DnaJ-bound protein, DnaK hydrolyzes its bound ATP, resulting in the formation of a stable complex. GrpE releases ADP from DnaK; ATP binding to DnaK triggers the release of the substrate protein, thus completing the reaction cycle. Several rounds of ATP-dependent interactions between DnaJ, DnaK and GrpE are required for fully efficient folding. Also involved, together with DnaK and GrpE, in the DNA replication of plasmids through activation of initiation proteins. The polypeptide is Chaperone protein DnaJ (Fusobacterium nucleatum subsp. polymorphum (Fusobacterium polymorphum)).